We begin with the raw amino-acid sequence, 871 residues long: Zinc finger protein 473 (871 aa).

Residues 6–75 (VTLKDVGMDF…AGGSPEATSP (70 aa)) form the KRAB domain. 2 disordered regions span residues 47–81 (PPRPNLTSHPDGSEDLEPLAGGSPEATSPDVTETK) and 140–164 (NGESPTECKSHELKRGLSPVSTVST). Residues 71–81 (EATSPDVTETK) show a composition bias toward polar residues. A compositionally biased stretch (basic and acidic residues) spans 145–154 (TECKSHELKR). Residue Lys148 forms a Glycyl lysine isopeptide (Lys-Gly) (interchain with G-Cter in SUMO2) linkage. The C2H2-type 1 zinc-finger motif lies at 209-231 (YQCSECGKSFSGSYRLTQHWITH). Residues 265–286 (YVCNEYGTTFSQSTYLWHQKTH) form a C2H2-type 2; degenerate zinc finger. Residues 290 to 317 (KPCKSQDSDHPPSHDTQPGEHQKTHTDS) show a composition bias toward basic and acidic residues. Positions 290–318 (KPCKSQDSDHPPSHDTQPGEHQKTHTDSK) are disordered. Residues 312–552 (KTHTDSKSYN…GFFVSGKILD (241 aa)) are interaction with SLBP/pre-mRNA complex. 3 C2H2-type zinc fingers span residues 320–342 (YNCNECGKAFTRIFHLTRHQKIH), 347–369 (YECSKCQATFNLRKHLIQHQKTH), and 375–397 (SECQECGKIFRHSSLLIEHQALH). The C2H2-type 6; degenerate zinc-finger motif lies at 403–425 (YKCNERGKSFRHNSTLKIHQRVH). Lys419 participates in a covalent cross-link: Glycyl lysine isopeptide (Lys-Gly) (interchain with G-Cter in SUMO2). 4 consecutive C2H2-type zinc fingers follow at residues 431 to 453 (YKCSECGKAFHRHTHLNEHRRIH), 459 to 481 (HKCQECVRSFSRPSHLMRHQAIH), 487 to 509 (YSCAECKETFSDNNRLVQHQKMH), and 515 to 537 (YECQECGERFICGSTLKCHESVH). Residues Lys549 and Lys558 each participate in a glycyl lysine isopeptide (Lys-Gly) (interchain with G-Cter in SUMO2) cross-link. 2 C2H2-type zinc fingers span residues 562-584 (FKCNKCEKTFSCSKYLTQHERIH) and 591-613 (FECDQCGKAFGQSTRLIHHQRIH). Lys635 is covalently cross-linked (Glycyl lysine isopeptide (Lys-Gly) (interchain with G-Cter in SUMO2)). 8 consecutive C2H2-type zinc fingers follow at residues 646 to 668 (FKCNECGKTFSHSAHLSKHQLIH), 674 to 696 (FKCSKCDRVFTQRNYLVQHERTH), 702 to 724 (LVCNECGKTFRQSSCLSKHQRIH), 730 to 752 (YVCDYCGKAFGLSAELVRHQRIH), 758 to 780 (YVCQECGKAFTQSSCLSIHRRVH), 786 to 808 (YRCGECGKAFAQKANLTQHQRIH), 814 to 836 (YSCNVCGKAFVLSAHLNQHLRVH), and 842 to 864 (YQCQRCQKAFRCHSSLSRHQRVH).

It belongs to the krueppel C2H2-type zinc-finger protein family. As to quaternary structure, interacts with the SLBP/pre-mRNA complex but not with SLBP alone. Interacts with LSM11 in a U7 snRNP-dependent manner.

It localises to the nucleus. Involved in histone 3'-end pre-mRNA processing by associating with U7 snRNP and interacting with SLBP/pre-mRNA complex. Increases histone 3'-end pre-mRNA processing but has no effect on U7 snRNP levels, when overexpressed. Required for cell cycle progression from G1 to S phases. The sequence is that of Zinc finger protein 473 (ZNF473) from Homo sapiens (Human).